The following is a 666-amino-acid chain: MPKIPSKETPRGVAIAEPIIVEHSVDLLMVGGGMGNCGAAFEAVRWADKYAPEAKILLVDKASLERSGAVAQGLSAINTYLGDNNADDYVRMVRTDLMGLVREDLIYDLGRHVDDSVHLFEEWGLPVWIKDEHGHNLDGAQAKAAGKSLRNGDKPVRSGRWQIMINGESYKVIVAEAAKNALGQDRIIERIFIVKLLLDKNTPNRIAGAVGFNLRANEVHIFKANAMVVACGGAVNVYRPRSVGEGMGRAWYPVWNAGSTYTMCAQVGAEMTMMENRFVPARFKDGYGPVGAWFLLFKAKATNCKGEDYCATNRAMLKPYEERGYAKGHVIPTCLRNHMMLREMREGRGPIYMDTKTALQTSFATMSPAQQKHLEAEAWEDFLDMCVGQANLWAATNCAPEERGSEIMPTEPYLLGSHSGCCGIWASGPDEAWVPEDYKVRAANGKVYNRMTTVEGLWTCADGVGASGHKFSSGSHAEGRIVGKQMVRWYLDHKDFKPEFVETAEELKTLIYRPYYNYEKGKGASTCPVVNPEYISPKNFMMRLIKCTDEYGGGVGTYYNTSKALLDTGFWLMEMLEEDSLKLAARDLHELLRCWENYHRLWTVRLHMQHIAFREESRYPGFYYRADFLGLDDSKWKCFVNSKYDPAKKETKIFKKPYYQIIPTDA.

FAD-binding positions include 32-35 (GGMG), 60-61 (DK), 67-69 (SGA), asparagine 78, isoleucine 193, serine 259, serine 417, 461-462 (AD), and serine 472.

This sequence belongs to the FAD-dependent oxidoreductase 2 family. In terms of assembly, heterodimer composed of AprA and AprB. The heterodimers can dimerize to form heterotetramers. Requires FAD as cofactor.

It is found in the cytoplasm. The enzyme catalyses sulfite + A + AMP + 2 H(+) = adenosine 5'-phosphosulfate + AH2. Functionally, catalytic subunit of the adenylylsulfate reductase which catalyzes reversibly the reduction of adenosine 5'-phosphosulfate (APS) to sulfite and AMP during dissimilatory sulfate reduction. The protein is Adenylylsulfate reductase subunit alpha of Megalodesulfovibrio gigas (strain ATCC 19364 / DSM 1382 / NCIMB 9332 / VKM B-1759) (Desulfovibrio gigas).